Consider the following 110-residue polypeptide: BolA-like protein 3 (110 aa).

This sequence belongs to the BolA/IbaG family. In terms of assembly, interacts with NFU1.

The protein resides in the mitochondrion. Its function is as follows. Acts as a mitochondrial iron-sulfur (Fe-S) cluster assembly factor that facilitates (Fe-S) cluster insertion into a subset of mitochondrial proteins. Probably acts together with NFU1. This Bos taurus (Bovine) protein is BolA-like protein 3 (BOLA3).